We begin with the raw amino-acid sequence, 277 residues long: Photosystem I assembly factor PSA3, chloroplastic (277 aa).

A chloroplast-targeting transit peptide spans Met-1–Arg-45.

As to quaternary structure, interacts with PYG7.

The protein resides in the plastid. It localises to the chloroplast. It is found in the chloroplast thylakoid membrane. In terms of biological role, nuclear genome-encoded factor required for the accumulation of photosystem I (PSI). Functions as a PSI biogenesis factor. Cooperates with PYG7 to promote the stable assembly of PSI in the thylakoid membrane. May target primarily the PsaC subunit. Does not seem to be required for the expression of chloroplast genes encoding PSI subunits. In Arabidopsis thaliana (Mouse-ear cress), this protein is Photosystem I assembly factor PSA3, chloroplastic.